Consider the following 278-residue polypeptide: Autotransporter adhesin BtaF (278 aa).

Positions 1–29 (MKLPPVFVFELVENQGLANIALIRPRVIA) are cleaved as a signal peptide. A surface exposed passenger domain region spans residues 30-182 (PDNNLRPGGI…RAAIRQNSAA (153 aa)). Positions 186 to 224 (LGQRVDGLQGQINSARKEARAGAANAAALSGLRYDNRPG) are outer membrane translocation of the passenger domain. Positions 225-278 (KVSIATGVGGFKGSTALAAGIGYTSKNENARYNVSVAYNEAGTSWNAGASFTLN) are translocator domain.

It belongs to the autotransporter-2 (AT-2) (TC 1.B.40) family. As to quaternary structure, homotrimer.

The protein localises to the cell surface. It localises to the cell outer membrane. In terms of biological role, participates in bacterial attachment to several surfaces, including various extracellular matrix (ECM) components and a hydrophobic abiotic surface. Involved in adhesion to host epithelial cells and is required for full virulence in mice. Also implicated in the resistance to porcine serum. The polypeptide is Autotransporter adhesin BtaF (Brucella suis biovar 1 (strain 1330)).